Here is a 239-residue protein sequence, read N- to C-terminus: Orotidine 5'-phosphate decarboxylase (239 aa).

Substrate contacts are provided by residues Asp10, Lys32, 59–68 (DLKLHDIPNT), Thr122, Arg184, Gln193, Gly213, and Arg214. Lys61 functions as the Proton donor in the catalytic mechanism.

The protein belongs to the OMP decarboxylase family. Type 1 subfamily. Homodimer.

It carries out the reaction orotidine 5'-phosphate + H(+) = UMP + CO2. It functions in the pathway pyrimidine metabolism; UMP biosynthesis via de novo pathway; UMP from orotate: step 2/2. In terms of biological role, catalyzes the decarboxylation of orotidine 5'-monophosphate (OMP) to uridine 5'-monophosphate (UMP). The sequence is that of Orotidine 5'-phosphate decarboxylase from Geobacillus sp. (strain WCH70).